The sequence spans 92 residues: Large ribosomal subunit protein bL28 (92 aa).

This sequence belongs to the bacterial ribosomal protein bL28 family.

The protein is Large ribosomal subunit protein bL28 of Borrelia garinii subsp. bavariensis (strain ATCC BAA-2496 / DSM 23469 / PBi) (Borreliella bavariensis).